The primary structure comprises 160 residues: Phosphopantetheine adenylyltransferase (160 aa).

Position 9 (Ser9) interacts with substrate. ATP contacts are provided by residues 9-10 (SF) and His17. Residues Lys41, Thr73, and Arg87 each contribute to the substrate site. Residues 88 to 90 (GMR), Glu98, and 123 to 129 (YTFFSSS) each bind ATP.

It belongs to the bacterial CoaD family. In terms of assembly, homohexamer. Mg(2+) is required as a cofactor.

The protein resides in the cytoplasm. The catalysed reaction is (R)-4'-phosphopantetheine + ATP + H(+) = 3'-dephospho-CoA + diphosphate. The protein operates within cofactor biosynthesis; coenzyme A biosynthesis; CoA from (R)-pantothenate: step 4/5. Reversibly transfers an adenylyl group from ATP to 4'-phosphopantetheine, yielding dephospho-CoA (dPCoA) and pyrophosphate. The sequence is that of Phosphopantetheine adenylyltransferase from Roseiflexus sp. (strain RS-1).